A 391-amino-acid chain; its full sequence is Cell cycle checkpoint control protein RAD9A (391 aa).

Residue Y28 is modified to Phosphotyrosine. The interval 51-91 (FLFAPLFFQQYQAATPGQDLLRCKILMKSFLSVFRSLAMLE) is possesses 3'-5' exonuclease activity. The sufficient for interaction with ABL1 stretch occupies residues 266–391 (SDTDSHSQDL…VLAEDSEGEG (126 aa)). The span at 268-282 (TDSHSQDLGSPERHQ) shows a compositional bias: basic and acidic residues. 2 disordered regions span residues 268 to 301 (TDSH…FAND) and 319 to 391 (SRVL…EGEG). S272, S277, and S328 each carry phosphoserine. S341 is modified (phosphoserine; by CK2). Phosphoserine occurs at positions 375 and 380. Phosphoserine; by CK2 is present on S387.

Belongs to the rad9 family. As to quaternary structure, component of the toroidal 9-1-1 (RAD9-RAD1-HUS1) complex, composed of RAD9A, RAD1 and HUS1. The 9-1-1 complex associates with LIG1, POLB, FEN1, RAD17, HDAC1, RPA1 and RPA2. The 9-1-1 complex associates with the RAD17-RFC complex. RAD9A interacts with BCL2L1, FEN1, RAD9B, ABL1, RPA1, ATAD5 and RPA2. Interacts with DNAJC7. Interacts (when phosphorylated) with TOPBP1. Constitutively phosphorylated on serine and threonine amino acids in absence of DNA damage. Hyperphosphorylated by PRKCD and ABL1 upon DNA damage. Its phosphorylation by PRKCD may be required for the formation of the 9-1-1 complex. Phosphorylated at Ser-341 and Ser-387 by CK2, promoting interaction with TOPBP1.

It localises to the nucleus. It carries out the reaction Exonucleolytic cleavage in the 3'- to 5'-direction to yield nucleoside 5'-phosphates.. Component of the 9-1-1 cell-cycle checkpoint response complex that plays a major role in DNA repair. The 9-1-1 complex is recruited to DNA lesion upon damage by the RAD17-replication factor C (RFC) clamp loader complex. Acts then as a sliding clamp platform on DNA for several proteins involved in long-patch base excision repair (LP-BER). The 9-1-1 complex stimulates DNA polymerase beta (POLB) activity by increasing its affinity for the 3'-OH end of the primer-template and stabilizes POLB to those sites where LP-BER proceeds; endonuclease FEN1 cleavage activity on substrates with double, nick, or gap flaps of distinct sequences and lengths; and DNA ligase I (LIG1) on long-patch base excision repair substrates. The 9-1-1 complex is necessary for the recruitment of RHNO1 to sites of double-stranded breaks (DSB) occurring during the S phase. RAD9A possesses 3'-&gt;5' double stranded DNA exonuclease activity. This is Cell cycle checkpoint control protein RAD9A (RAD9A) from Homo sapiens (Human).